Here is a 25-residue protein sequence, read N- to C-terminus: Caerin 2.1 (25 aa).

As to expression, expressed by the skin dorsal glands.

The protein localises to the secreted. Its function is as follows. Antibacterial peptide with narrow spectrum of activity. Active against the Gram-negative bacterium P.multocida (MIC=25 ug/ml). Inhibits the formation of NO by neuronal nitric oxide synthase with an IC(50) of 9 ug/ml. The sequence is that of Caerin 2.1 from Litoria peronii (Emerald spotted tree frog).